The following is a 172-amino-acid chain: Adenine phosphoribosyltransferase (172 aa).

The protein belongs to the purine/pyrimidine phosphoribosyltransferase family. In terms of assembly, homodimer.

It is found in the cytoplasm. The catalysed reaction is AMP + diphosphate = 5-phospho-alpha-D-ribose 1-diphosphate + adenine. The protein operates within purine metabolism; AMP biosynthesis via salvage pathway; AMP from adenine: step 1/1. Its function is as follows. Catalyzes a salvage reaction resulting in the formation of AMP, that is energically less costly than de novo synthesis. The polypeptide is Adenine phosphoribosyltransferase (Clostridium beijerinckii (strain ATCC 51743 / NCIMB 8052) (Clostridium acetobutylicum)).